An 85-amino-acid polypeptide reads, in one-letter code: Toxin To9 (85 aa).

The signal sequence occupies residues 1-19 (MNYSTLIAVASLLTAGTES). The LCN-type CS-alpha/beta domain maps to 21 to 81 (KDGYPVKEGD…AAIKGYGRCR (61 aa)). Cystine bridges form between Cys-31/Cys-80, Cys-35/Cys-56, Cys-42/Cys-63, and Cys-46/Cys-65. Pro-82 carries the proline amide modification.

The protein belongs to the long (4 C-C) scorpion toxin superfamily. Sodium channel inhibitor family. Alpha subfamily. Expressed by the venom gland.

It is found in the secreted. Functionally, alpha toxins bind voltage-independently at site-3 of sodium channels (Nav) and inhibit the inactivation of the activated channels, thereby blocking neuronal transmission. In Tityus obscurus (Amazonian scorpion), this protein is Toxin To9.